Here is a 358-residue protein sequence, read N- to C-terminus: Photosystem II protein D1 2 (358 aa).

A run of 3 helical transmembrane segments spans residues 28–45 (YVGWFGVLMIPCLLAATI), 117–132 (HFLIGISAYMGRQWEL), and 141–155 (WICVAYSAPLSAAMA). Histidine 117 provides a ligand contact to chlorophyll a. Tyrosine 125 is a binding site for pheophytin a. Residues aspartate 169 and glutamate 188 each coordinate [CaMn4O5] cluster. Residues 196 to 217 (FHMLGVAGVFGGSLFSAMHGSL) traverse the membrane as a helical segment. Histidine 197 serves as a coordination point for chlorophyll a. A quinone is bound by residues histidine 214 and 263–264 (SF). Histidine 214 contacts Fe cation. A Fe cation-binding site is contributed by histidine 271. A helical transmembrane segment spans residues 273–287 (FLGAWPVVGIWFTSM). Histidine 331, glutamate 332, aspartate 341, and alanine 343 together coordinate [CaMn4O5] cluster. Positions 344 to 358 (AAESTPVALQAPAIG) are excised as a propeptide.

The protein belongs to the reaction center PufL/M/PsbA/D family. In terms of assembly, PSII is composed of 1 copy each of membrane proteins PsbA, PsbB, PsbC, PsbD, PsbE, PsbF, PsbH, PsbI, PsbJ, PsbK, PsbL, PsbM, PsbT, PsbX, PsbY, PsbZ, Psb30/Ycf12, peripheral proteins PsbO, CyanoQ (PsbQ), PsbU, PsbV and a large number of cofactors. It forms dimeric complexes. The D1/D2 heterodimer binds P680, chlorophylls that are the primary electron donor of PSII, and subsequent electron acceptors. It shares a non-heme iron and each subunit binds pheophytin, quinone, additional chlorophylls, carotenoids and lipids. D1 provides most of the ligands for the Mn4-Ca-O5 cluster of the oxygen-evolving complex (OEC). There is also a Cl(-1) ion associated with D1 and D2, which is required for oxygen evolution. The PSII complex binds additional chlorophylls, carotenoids and specific lipids. is required as a cofactor. In terms of processing, tyr-160 forms a radical intermediate that is referred to as redox-active TyrZ, YZ or Y-Z. Post-translationally, C-terminally processed by CtpA; processing is essential to allow assembly of the oxygen-evolving complex and thus photosynthetic growth.

Its subcellular location is the cellular thylakoid membrane. It catalyses the reaction 2 a plastoquinone + 4 hnu + 2 H2O = 2 a plastoquinol + O2. Its function is as follows. Photosystem II (PSII) is a light-driven water:plastoquinone oxidoreductase that uses light energy to abstract electrons from H(2)O, generating O(2) and a proton gradient subsequently used for ATP formation. It consists of a core antenna complex that captures photons, and an electron transfer chain that converts photonic excitation into a charge separation. The D1/D2 (PsbA/PsbD) reaction center heterodimer binds P680, the primary electron donor of PSII as well as several subsequent electron acceptors. This chain is Photosystem II protein D1 2, found in Synechococcus sp. (strain CC9605).